Consider the following 262-residue polypeptide: Acyl-[acyl-carrier-protein]--UDP-N-acetylglucosamine O-acyltransferase (262 aa).

This sequence belongs to the transferase hexapeptide repeat family. LpxA subfamily. In terms of assembly, homotrimer.

It is found in the cytoplasm. The catalysed reaction is a (3R)-hydroxyacyl-[ACP] + UDP-N-acetyl-alpha-D-glucosamine = a UDP-3-O-[(3R)-3-hydroxyacyl]-N-acetyl-alpha-D-glucosamine + holo-[ACP]. The protein operates within glycolipid biosynthesis; lipid IV(A) biosynthesis; lipid IV(A) from (3R)-3-hydroxytetradecanoyl-[acyl-carrier-protein] and UDP-N-acetyl-alpha-D-glucosamine: step 1/6. Functionally, involved in the biosynthesis of lipid A, a phosphorylated glycolipid that anchors the lipopolysaccharide to the outer membrane of the cell. The protein is Acyl-[acyl-carrier-protein]--UDP-N-acetylglucosamine O-acyltransferase of Aliivibrio salmonicida (strain LFI1238) (Vibrio salmonicida (strain LFI1238)).